A 242-amino-acid chain; its full sequence is NAD-dependent protein deacylase 1 (242 aa).

One can recognise a Deacetylase sirtuin-type domain in the interval 1–242 (MDFKILKEKL…FAMKFEEKEG (242 aa)). An NAD(+)-binding site is contributed by 21–40 (GAGISKESGIPTFRGEDGLW). Positions 65 and 68 each coordinate substrate. Residue 99–102 (QNVD) coordinates NAD(+). H117 (proton acceptor) is an active-site residue. The Zn(2+) site is built by C125, C128, C146, and C149. Residues 186–188 (GTS) and E241 each bind NAD(+).

It belongs to the sirtuin family. Class III subfamily. Zn(2+) serves as cofactor.

It is found in the cytoplasm. It catalyses the reaction N(6)-acetyl-L-lysyl-[protein] + NAD(+) + H2O = 2''-O-acetyl-ADP-D-ribose + nicotinamide + L-lysyl-[protein]. It carries out the reaction N(6)-succinyl-L-lysyl-[protein] + NAD(+) + H2O = 2''-O-succinyl-ADP-D-ribose + nicotinamide + L-lysyl-[protein]. Its function is as follows. NAD-dependent lysine deacetylase and desuccinylase that specifically removes acetyl and succinyl groups on target proteins. Modulates the activities of several proteins which are inactive in their acylated form. This Caldanaerobacter subterraneus subsp. tengcongensis (strain DSM 15242 / JCM 11007 / NBRC 100824 / MB4) (Thermoanaerobacter tengcongensis) protein is NAD-dependent protein deacylase 1.